A 155-amino-acid polypeptide reads, in one-letter code: Transcriptional repressor NrdR (155 aa).

A zinc finger lies at 3-34 (CPFCQHDDTQVLDTRVSEEGDSIRRRRRCTSC). The ATP-cone domain occupies 49–139 (PVVVKKNGSR…VYKSFEDVAE (91 aa)).

It belongs to the NrdR family. Zn(2+) serves as cofactor.

In terms of biological role, negatively regulates transcription of bacterial ribonucleotide reductase nrd genes and operons by binding to NrdR-boxes. The sequence is that of Transcriptional repressor NrdR from Janthinobacterium sp. (strain Marseille) (Minibacterium massiliensis).